The primary structure comprises 196 residues: Beta-crystallin A4 (196 aa).

N-acetylthreonine is present on Thr2. The N-terminal arm stretch occupies residues 2–11 (TLQCTKSAGP). 2 Beta/gamma crystallin 'Greek key' domains span residues 12–51 (WKMVVWDEDGFQGRRHEFTAECPSVLELGFETVRSLKVLS) and 52–98 (GAWV…RPAA). Positions 99-104 (CANHRD) are connecting peptide. Beta/gamma crystallin 'Greek key' domains lie at 105–146 (SRLT…HVHS) and 147–195 (GAWV…RRIQ).

Belongs to the beta/gamma-crystallin family. Homo/heterodimer, or complexes of higher-order. The structure of beta-crystallin oligomers seems to be stabilized through interactions between the N-terminal arms.

Its function is as follows. Crystallins are the dominant structural components of the vertebrate eye lens. This chain is Beta-crystallin A4 (CRYBA4), found in Homo sapiens (Human).